The chain runs to 359 residues: MAADGKNVLIMAGGTGGHVFPALACAREFQARGYTVHWLGTPRGIENELVPQAGLSLHLIQVSGLRGKGKLSLLKAPFTLVKAVLQARRIIGQLKPVCVIGFGGYVTGPGGVAARLCGVPLVIHEQNARAGTANRLLVPLSARVCEAFPGTFEAGEKLRTTGNPVRPELFMDAQRAPLGERRARLLVMGGSLGAEPLNKLLPKALSEVPADLRPEVFHQAGKHHAPITAERYQEAGVEAQVEPFIKDMAHAYGWADLVVCRAGALTVSELAAAGLPSMLVPLPHAIDDHQTHNAQYLAREGAAFLMPQATTGAAQLAERLNEVLMQPEKLNTMARTARRLAKPSATSTVVDICLEVAHG.

UDP-N-acetyl-alpha-D-glucosamine contacts are provided by residues threonine 15 to glycine 17, asparagine 127, arginine 166, serine 191, isoleucine 245, alanine 264 to glutamate 269, and glutamine 290.

It belongs to the glycosyltransferase 28 family. MurG subfamily.

It localises to the cell inner membrane. It carries out the reaction di-trans,octa-cis-undecaprenyl diphospho-N-acetyl-alpha-D-muramoyl-L-alanyl-D-glutamyl-meso-2,6-diaminopimeloyl-D-alanyl-D-alanine + UDP-N-acetyl-alpha-D-glucosamine = di-trans,octa-cis-undecaprenyl diphospho-[N-acetyl-alpha-D-glucosaminyl-(1-&gt;4)]-N-acetyl-alpha-D-muramoyl-L-alanyl-D-glutamyl-meso-2,6-diaminopimeloyl-D-alanyl-D-alanine + UDP + H(+). It participates in cell wall biogenesis; peptidoglycan biosynthesis. Functionally, cell wall formation. Catalyzes the transfer of a GlcNAc subunit on undecaprenyl-pyrophosphoryl-MurNAc-pentapeptide (lipid intermediate I) to form undecaprenyl-pyrophosphoryl-MurNAc-(pentapeptide)GlcNAc (lipid intermediate II). The chain is UDP-N-acetylglucosamine--N-acetylmuramyl-(pentapeptide) pyrophosphoryl-undecaprenol N-acetylglucosamine transferase from Pseudomonas putida (strain W619).